We begin with the raw amino-acid sequence, 297 residues long: uncharacterized protein (297 aa).

Helical transmembrane passes span 1–21 (MSWIIFYTIIAALLILDLGII), 32–52 (GSILLSLFYFIISCLFGIYVY), 72–92 (AMALDNIFIISIIFQFFNIPS), 98–118 (VLFFGIIGVIIFKAIIIYGGI), 120–140 (LIHKFSWLLYILAVILIATGI), 194–214 (ILIETIDLVFAIDSIAAIFAI), 218–238 (VYIIYTSNIFAILGLRSLFFC), 253–273 (LALILIFIGFKIFIHHYIEIP), and 274–294 (AYISLTVTISSLLFGIIASIL).

The protein belongs to the TerC family.

The protein localises to the cell membrane. This is an uncharacterized protein from Rickettsia prowazekii (strain Madrid E).